We begin with the raw amino-acid sequence, 385 residues long: Protein pelota homolog (385 aa).

A Glycyl lysine isopeptide (Lys-Gly) (interchain with G-Cter in SUMO2) cross-link involves residue Lys-162. Residues Ser-374, Ser-380, Ser-381, and Ser-382 each carry the phosphoserine modification.

It belongs to the eukaryotic release factor 1 family. Pelota subfamily. In terms of assembly, component of the Pelota-HBS1L complex, also named Dom34-Hbs1 complex, composed of PELO and HBS1L. Interacts with PINK1. Interacts with ABCE1. Interacts with CNOT4. Requires a divalent metal cation as cofactor.

The protein localises to the cytoplasm. Functionally, component of the Pelota-HBS1L complex, a complex that recognizes stalled ribosomes and triggers the No-Go Decay (NGD) pathway. In the Pelota-HBS1L complex, PELO recognizes ribosomes stalled at the 3' end of an mRNA and engages stalled ribosomes by destabilizing mRNA in the mRNA channel. Following mRNA extraction from stalled ribosomes by the SKI complex, the Pelota-HBS1L complex promotes recruitment of ABCE1, which drives the disassembly of stalled ribosomes, followed by degradation of damaged mRNAs as part of the NGD pathway. As part of the PINK1-regulated signaling, upon mitochondrial damage is recruited to the ribosome/mRNA-ribonucleoprotein complex associated to mitochondrial outer membrane thereby enabling the recruitment of autophagy receptors and induction of mitophagy. The sequence is that of Protein pelota homolog (PELO) from Pongo abelii (Sumatran orangutan).